Reading from the N-terminus, the 78-residue chain is Apolipoprotein C-I (78 aa).

Positions 1–26 (MRLILWLPVLVVVLLMVLEGPAPAQG) are cleaved as a signal peptide.

This sequence belongs to the apolipoprotein C1 family.

It localises to the secreted. In terms of biological role, inhibitor of lipoprotein binding to the low density lipoprotein (LDL) receptor, LDL receptor-related protein, and very low density lipoprotein (VLDL) receptor. Associates with high density lipoproteins (HDL) and the triacylglycerol-rich lipoproteins in the plasma and makes up about 10% of the protein of the VLDL and 2% of that of HDL. Appears to interfere directly with fatty acid uptake and is also the major plasma inhibitor of cholesteryl ester transfer protein (CETP). Binds free fatty acids and reduces their intracellular esterification. Modulates the interaction of APOE with beta-migrating VLDL and inhibits binding of beta-VLDL to the LDL receptor-related protein. The chain is Apolipoprotein C-I (APOC1) from Lynx pardinus (Iberian lynx).